The following is a 94-amino-acid chain: Phormicin (94 aa).

A signal peptide spans 1–23; sequence MKFFMVFVVTFCLAVCFVSQSLA. Residues 24–54 constitute a propeptide that is removed on maturation; that stretch reads IPADAANDAHFVDGVQALKEIEPELHGRYKR. 3 disulfide bridges follow: C57–C84, C70–C90, and C74–C92.

The protein belongs to the invertebrate defensin family. Type 1 subfamily.

Its subcellular location is the secreted. Its function is as follows. Responsible for the anti Gram-positive activity of immune hemolymph of P.terraenovae. This chain is Phormicin, found in Protophormia terraenovae (Northern blowfly).